A 215-amino-acid chain; its full sequence is Adenylate kinase (215 aa).

10–15 (GAGKGT) is an ATP binding site. The interval 30-59 (STGDMFRKAIKEETELGKEAKSYMDRGELV) is NMP. Residues Thr31, Arg36, 57-59 (ELV), 85-88 (GFPR), and Gln92 each bind AMP. Positions 126-163 (GRRICESCGTTYHLVFNPPKVEGICDIDGGKLYQREDD) are LID. Arg127 is an ATP binding site. Zn(2+) is bound by residues Cys130 and Cys133. ATP is bound at residue 136–137 (TY). Zn(2+) contacts are provided by Cys150 and Asp153. 2 residues coordinate AMP: Arg160 and Arg171. An ATP-binding site is contributed by Lys199.

This sequence belongs to the adenylate kinase family. In terms of assembly, monomer.

It localises to the cytoplasm. It catalyses the reaction AMP + ATP = 2 ADP. The protein operates within purine metabolism; AMP biosynthesis via salvage pathway; AMP from ADP: step 1/1. In terms of biological role, catalyzes the reversible transfer of the terminal phosphate group between ATP and AMP. Plays an important role in cellular energy homeostasis and in adenine nucleotide metabolism. This chain is Adenylate kinase, found in Staphylococcus aureus (strain COL).